We begin with the raw amino-acid sequence, 185 residues long: Peptidyl-tRNA hydrolase (185 aa).

Residue Y14 participates in tRNA binding. Residue H19 is the Proton acceptor of the active site. Residues Y64, N66, and N112 each contribute to the tRNA site.

It belongs to the PTH family. As to quaternary structure, monomer.

The protein localises to the cytoplasm. The catalysed reaction is an N-acyl-L-alpha-aminoacyl-tRNA + H2O = an N-acyl-L-amino acid + a tRNA + H(+). Functionally, hydrolyzes ribosome-free peptidyl-tRNAs (with 1 or more amino acids incorporated), which drop off the ribosome during protein synthesis, or as a result of ribosome stalling. Its function is as follows. Catalyzes the release of premature peptidyl moieties from peptidyl-tRNA molecules trapped in stalled 50S ribosomal subunits, and thus maintains levels of free tRNAs and 50S ribosomes. The protein is Peptidyl-tRNA hydrolase of Exiguobacterium sibiricum (strain DSM 17290 / CCUG 55495 / CIP 109462 / JCM 13490 / 255-15).